The sequence spans 309 residues: Homoserine O-succinyltransferase (309 aa).

Cys142 (acyl-thioester intermediate) is an active-site residue. Substrate-binding residues include Lys163 and Ser192. Residue His235 is the Proton acceptor of the active site. Glu237 is an active-site residue. Arg249 contributes to the substrate binding site.

The protein belongs to the MetA family.

Its subcellular location is the cytoplasm. The catalysed reaction is L-homoserine + succinyl-CoA = O-succinyl-L-homoserine + CoA. It functions in the pathway amino-acid biosynthesis; L-methionine biosynthesis via de novo pathway; O-succinyl-L-homoserine from L-homoserine: step 1/1. Transfers a succinyl group from succinyl-CoA to L-homoserine, forming succinyl-L-homoserine. The sequence is that of Homoserine O-succinyltransferase from Erwinia tasmaniensis (strain DSM 17950 / CFBP 7177 / CIP 109463 / NCPPB 4357 / Et1/99).